Here is a 248-residue protein sequence, read N- to C-terminus: tRNA pseudouridine synthase A (248 aa).

Catalysis depends on D53, which acts as the Nucleophile. Y111 lines the substrate pocket.

This sequence belongs to the tRNA pseudouridine synthase TruA family. In terms of assembly, homodimer.

It catalyses the reaction uridine(38/39/40) in tRNA = pseudouridine(38/39/40) in tRNA. In terms of biological role, formation of pseudouridine at positions 38, 39 and 40 in the anticodon stem and loop of transfer RNAs. This chain is tRNA pseudouridine synthase A, found in Streptococcus thermophilus (strain ATCC BAA-491 / LMD-9).